Reading from the N-terminus, the 384-residue chain is Alanine racemase (384 aa).

Lys-39 (proton acceptor; specific for D-alanine) is an active-site residue. The residue at position 39 (Lys-39) is an N6-(pyridoxal phosphate)lysine. Arg-138 is a substrate binding site. Catalysis depends on Tyr-265, which acts as the Proton acceptor; specific for L-alanine. Met-312 is a substrate binding site.

The protein belongs to the alanine racemase family. Pyridoxal 5'-phosphate serves as cofactor.

The catalysed reaction is L-alanine = D-alanine. Its pathway is amino-acid biosynthesis; D-alanine biosynthesis; D-alanine from L-alanine: step 1/1. Catalyzes the interconversion of L-alanine and D-alanine. May also act on other amino acids. This is Alanine racemase (alr) from Staphylococcus carnosus (strain TM300).